A 382-amino-acid polypeptide reads, in one-letter code: ORC1-type DNA replication protein 1 (382 aa).

ATP-binding positions include 63–67, Tyr-205, and Arg-217; that span reads TGKTA.

Belongs to the CDC6/cdc18 family. Monomer. Interacts with MCM via the WH domain. In terms of processing, autophosphorylated on a serine. Phosphorylation is stimulated by binding to MCM. Both single-stranded DNA and double-stranded DNA inhibit the phosphorylation reaction.

In terms of biological role, involved in regulation of DNA replication. May play an essential role in origin recognition. Binds to DNA, with a preference for origin-specific double-stranded sequences. Does not bind single-stranded DNA. Inhibits MCM helicase activity but does not affect its oligomeric state. The polypeptide is ORC1-type DNA replication protein 1 (cdc6-1) (Methanothermobacter thermautotrophicus (strain ATCC 29096 / DSM 1053 / JCM 10044 / NBRC 100330 / Delta H) (Methanobacterium thermoautotrophicum)).